Consider the following 138-residue polypeptide: Transcription antitermination protein NusB (138 aa).

It belongs to the NusB family.

Its function is as follows. Involved in transcription antitermination. Required for transcription of ribosomal RNA (rRNA) genes. Binds specifically to the boxA antiterminator sequence of the ribosomal RNA (rrn) operons. The chain is Transcription antitermination protein NusB from Helicobacter pylori (strain ATCC 700392 / 26695) (Campylobacter pylori).